The primary structure comprises 313 residues: Protein OPG185 (313 aa).

Residues 1 to 16 form the signal peptide; sequence MTRLSILLLLISLVYS. At 17-277 the chain is on the virion surface side; sequence TPYPQTQISK…GKYSTKDYVK (261 aa). The 104-residue stretch at 18–121 folds into the Ig-like V-type domain; it reads PYPQTQISKK…TTNDTDKVDY (104 aa). A disulfide bridge connects residues Cys-36 and Cys-105. N-linked (GlcNAc...) asparagine; by host glycosylation is found at Asn-71, Asn-114, Asn-163, Asn-182, and Asn-262. A helical membrane pass occupies residues 278–301; it reads VFGIAALIILSAVAIFCITYYICN. Residues 302 to 313 are Intravirion-facing; that stretch reads KRSRKYKTENKV.

It belongs to the orthopoxvirus OPG185 family. As to quaternary structure, heterodimerizes with OPG040. The heterodimer OPG185-OPG040 interacts with components of the entry fusion complex OPG143 and OPG094. Heterodimer with C3/VPC protein; disulfide-linked. Post-translationally, glycosylated; contains phosphate and sulfate-substituted glycans. O-glycosylation is required for hemagglutination and hemadsorption activities of infected cell membranes.

It localises to the virion membrane. It is found in the host membrane. Prevents cell to cell fusion by interacting with and directing the viral OPG040 protein on the host plasma membrane. The OPG185-OPG040 complex associates with components of the entry fusion complex (EFC) presumably to avoid superinfection and syncytium formation. Via its interaction with C3/VCP protein, protects the infected cell and probably also the extracellular enveloped virus from complement attack. The sequence is that of Protein OPG185 (OPG185) from Homo sapiens (Human).